The sequence spans 35 residues: Cupiennin-2a (35 aa).

Residue Lys35 is modified to Lysine amide.

Expressed by the venom gland.

It is found in the secreted. The protein is Cupiennin-2a of Cupiennius salei (American wandering spider).